The primary structure comprises 88 residues: Small ribosomal subunit protein uS15 (88 aa).

Belongs to the universal ribosomal protein uS15 family. In terms of assembly, part of the 30S ribosomal subunit. Forms a bridge to the 50S subunit in the 70S ribosome, contacting the 23S rRNA.

One of the primary rRNA binding proteins, it binds directly to 16S rRNA where it helps nucleate assembly of the platform of the 30S subunit by binding and bridging several RNA helices of the 16S rRNA. Functionally, forms an intersubunit bridge (bridge B4) with the 23S rRNA of the 50S subunit in the ribosome. The chain is Small ribosomal subunit protein uS15 from Sorangium cellulosum (strain So ce56) (Polyangium cellulosum (strain So ce56)).